The primary structure comprises 357 residues: GTPase Obg (357 aa).

Residues Met1–Ile158 enclose the Obg domain. The region spanning Ala159–Glu345 is the OBG-type G domain. GTP-binding positions include Gly165–Ser172, Phe190–Thr194, Asp212–Gly215, Thr280–Asp283, and Ser326–Val328. Residues Ser172 and Thr192 each contribute to the Mg(2+) site.

It belongs to the TRAFAC class OBG-HflX-like GTPase superfamily. OBG GTPase family. In terms of assembly, monomer. The cofactor is Mg(2+).

Its subcellular location is the cytoplasm. In terms of biological role, an essential GTPase which binds GTP, GDP and possibly (p)ppGpp with moderate affinity, with high nucleotide exchange rates and a fairly low GTP hydrolysis rate. Plays a role in control of the cell cycle, stress response, ribosome biogenesis and in those bacteria that undergo differentiation, in morphogenesis control. This chain is GTPase Obg, found in Nautilia profundicola (strain ATCC BAA-1463 / DSM 18972 / AmH).